Reading from the N-terminus, the 1035-residue chain is Beta-galactosidase (1035 aa).

Substrate is bound by residues Asn101 and Asp199. Asp199 provides a ligand contact to Na(+). Positions 415, 417, and 460 each coordinate Mg(2+). Substrate-binding positions include Glu460 and 540 to 543; that span reads EYAH. The active-site Proton donor is the Glu460. The active-site Nucleophile is the Glu540. Residue Asn600 participates in Mg(2+) binding. 2 residues coordinate Na(+): Phe604 and Asn607. Positions 607 and 1011 each coordinate substrate.

Belongs to the glycosyl hydrolase 2 family. As to quaternary structure, homotetramer. It depends on Mg(2+) as a cofactor. Requires Na(+) as cofactor.

It carries out the reaction Hydrolysis of terminal non-reducing beta-D-galactose residues in beta-D-galactosides.. The protein is Beta-galactosidase of Psychromonas ingrahamii (strain DSM 17664 / CCUG 51855 / 37).